We begin with the raw amino-acid sequence, 111 residues long: Nucleoid-associated protein SynRCC307_0025 (111 aa).

Belongs to the YbaB/EbfC family. Homodimer.

It is found in the cytoplasm. The protein resides in the nucleoid. In terms of biological role, binds to DNA and alters its conformation. May be involved in regulation of gene expression, nucleoid organization and DNA protection. This is Nucleoid-associated protein SynRCC307_0025 from Synechococcus sp. (strain RCC307).